The following is a 194-amino-acid chain: Peptidyl-tRNA hydrolase (194 aa).

Tyr-17 provides a ligand contact to tRNA. The active-site Proton acceptor is the His-22. Positions 68, 70, and 116 each coordinate tRNA.

The protein belongs to the PTH family. As to quaternary structure, monomer.

Its subcellular location is the cytoplasm. The catalysed reaction is an N-acyl-L-alpha-aminoacyl-tRNA + H2O = an N-acyl-L-amino acid + a tRNA + H(+). In terms of biological role, hydrolyzes ribosome-free peptidyl-tRNAs (with 1 or more amino acids incorporated), which drop off the ribosome during protein synthesis, or as a result of ribosome stalling. Functionally, catalyzes the release of premature peptidyl moieties from peptidyl-tRNA molecules trapped in stalled 50S ribosomal subunits, and thus maintains levels of free tRNAs and 50S ribosomes. This Actinobacillus succinogenes (strain ATCC 55618 / DSM 22257 / CCUG 43843 / 130Z) protein is Peptidyl-tRNA hydrolase.